Here is a 120-residue protein sequence, read N- to C-terminus: Non-specific lipid-transfer protein (120 aa).

The N-terminal stretch at 1–26 is a signal peptide; sequence MASSMSLKLACVVVLCMVVGAPLAQG. 3 cysteine pairs are disulfide-bonded: Cys-40/Cys-56, Cys-57/Cys-102, and Cys-77/Cys-116.

Belongs to the plant LTP family.

Plant non-specific lipid-transfer proteins transfer phospholipids as well as galactolipids across membranes. May play a role in wax or cutin deposition in the cell walls of expanding epidermal cells and certain secretory tissues. In Gossypium hirsutum (Upland cotton), this protein is Non-specific lipid-transfer protein.